The following is a 982-amino-acid chain: Protein cramped (982 aa).

5 disordered regions span residues 1–37, 71–111, 323–349, 407–456, and 822–851; these read MEELSKQPPPPPLTQPPPPSSSVSIEEPLPNGKGGGA, QKMK…GSGK, SLPSAASNNNNNNNETEPLQPSVASLD, NKRL…SSGD, and GTSSAGISTSGSKPDCSMNAMTASQDQEPG. Residues 7–20 show a composition bias toward pro residues; that stretch reads QPPPPPLTQPPPPS. Low complexity predominate over residues 21–30; sequence SSVSIEEPLP. The segment covering 86-98 has biased composition (basic and acidic residues); the sequence is SEREPNKKEEKAA. Over residues 100-111 the composition is skewed to polar residues; the sequence is KTPSQLKTGSGK. The SANT domain maps to 109 to 173; that stretch reads SGKTTWTNVE…HYYQTHHKIC (65 aa). Basic and acidic residues predominate over residues 410-425; it reads LRTESGSEKRSPETKK. Phosphoserine is present on residues Ser431 and Ser437. Over residues 822–833 the composition is skewed to low complexity; the sequence is GTSSAGISTSGS.

Belongs to the cramped family. In terms of tissue distribution, ubiquitously expressed throughout embryonic development. High expression is detected in CNS and gonads.

It is found in the nucleus. Polycomb group (Pc-G) genes are needed to maintain expression patterns of the homeotic selector genes of the Antennapedia (Antp-C) and Bithorax (Bx-C) complexes, and hence for the maintenance of segmental determination. Can act as a modifier of position effect variegation (PEV). This chain is Protein cramped (crm), found in Drosophila melanogaster (Fruit fly).